A 520-amino-acid polypeptide reads, in one-letter code: Protein U4 (520 aa).

This sequence belongs to the herpesviridae U4 family.

This Elephantid herpesvirus 1 (isolate Asian elephant/Berlin/Kiba/1998) (EIHV-1) protein is Protein U4.